Consider the following 148-residue polypeptide: MNFSFVPLFLVTLILLGVVSNNNSITISATILLLMQQTALVQFVPLVEKHGLNLGIILLTIGVLSPLVSGKAQVPPVAEFLNFKMISAVFIGIFVAWLAGRGVPLMGQQPVLITGLLIGTVIGVAFMGGIPVGPLIAAGILSFVVGKG.

A run of 4 helical transmembrane segments spans residues 13–35 (LILL…LLLM), 50–70 (HGLN…LVSG), 80–100 (FLNF…WLAG), and 121–141 (VIGV…AGIL).

This sequence belongs to the UPF0756 family.

The protein resides in the cell membrane. This chain is UPF0756 membrane protein NMC1845, found in Neisseria meningitidis serogroup C / serotype 2a (strain ATCC 700532 / DSM 15464 / FAM18).